We begin with the raw amino-acid sequence, 263 residues long: Type III pantothenate kinase (263 aa).

9 to 16 (DIGNTNVK) contributes to the ATP binding site. Substrate contacts are provided by residues tyrosine 103 and 110–113 (GADR). The Proton acceptor role is filled by aspartate 112. Residue aspartate 134 participates in K(+) binding. ATP is bound at residue threonine 137. Substrate is bound at residue threonine 190.

It belongs to the type III pantothenate kinase family. As to quaternary structure, homodimer. The cofactor is NH4(+). It depends on K(+) as a cofactor.

It localises to the cytoplasm. It catalyses the reaction (R)-pantothenate + ATP = (R)-4'-phosphopantothenate + ADP + H(+). It functions in the pathway cofactor biosynthesis; coenzyme A biosynthesis; CoA from (R)-pantothenate: step 1/5. Functionally, catalyzes the phosphorylation of pantothenate (Pan), the first step in CoA biosynthesis. The chain is Type III pantothenate kinase from Oleidesulfovibrio alaskensis (strain ATCC BAA-1058 / DSM 17464 / G20) (Desulfovibrio alaskensis).